The sequence spans 78 residues: Acyl carrier protein (78 aa).

One can recognise a Carrier domain in the interval 2–77 (STIEERVKKI…AAIDYILSHQ (76 aa)). An O-(pantetheine 4'-phosphoryl)serine modification is found at Ser-37.

Belongs to the acyl carrier protein (ACP) family. In terms of processing, 4'-phosphopantetheine is transferred from CoA to a specific serine of apo-ACP by AcpS. This modification is essential for activity because fatty acids are bound in thioester linkage to the sulfhydryl of the prosthetic group.

Its subcellular location is the cytoplasm. Its pathway is lipid metabolism; fatty acid biosynthesis. Functionally, carrier of the growing fatty acid chain in fatty acid biosynthesis. This Tolumonas auensis (strain DSM 9187 / NBRC 110442 / TA 4) protein is Acyl carrier protein.